The sequence spans 684 residues: Transcriptional regulatory protein RCO1 (684 aa).

M1 bears the N-acetylmethionine mark. A disordered region spans residues 1-48; the sequence is MDTSKKDTTRSPSHSNSSSPSSSSLSSSSSKEKKRPKRLSSQNVNYDL. The segment covering 10–29 has biased composition (low complexity); the sequence is RSPSHSNSSSPSSSSLSSSS. S68 carries the phosphoserine modification. The PHD-type 1 zinc-finger motif lies at 260-309; the sequence is EDFCSACNQSGSFLCCDTCPKSFHFLCLDPPIDPNNLPKGDWHCNECKFK. The PHD-type 2; atypical zinc-finger motif lies at 414-472; sequence FLICYKCNQTRLGSWSHPENSRLIMTCDYCQTPWHLDCVPRASFKNLGSKWKCPLHSPT. Position 683 is a phosphoserine (S683).

In terms of assembly, component of the RPD3C(S) complex composed of at least EAF3, RCO1, RPD3, SIN3, and UME1.

Its subcellular location is the nucleus. Catalytic component of the RPD3C(S) histone deacetylase complex responsible for the deacetylation of lysine residues on the N-terminal part of the core histones (H2A, H2B, H3 and H4). Histone deacetylation gives a tag for epigenetic repression and plays an important role in transcriptional regulation, cell cycle progression, DNA damage response, osmotic stress response and developmental events. This chain is Transcriptional regulatory protein RCO1 (RCO1), found in Saccharomyces cerevisiae (strain ATCC 204508 / S288c) (Baker's yeast).